We begin with the raw amino-acid sequence, 206 residues long: Glycerol-3-phosphate acyltransferase (206 aa).

The next 6 helical transmembrane spans lie at T4 to V24, L53 to A73, G86 to F106, V116 to F136, M137 to V157, and F160 to V180.

The protein belongs to the PlsY family. As to quaternary structure, probably interacts with PlsX.

It localises to the cell inner membrane. The enzyme catalyses an acyl phosphate + sn-glycerol 3-phosphate = a 1-acyl-sn-glycero-3-phosphate + phosphate. Its pathway is lipid metabolism; phospholipid metabolism. Its function is as follows. Catalyzes the transfer of an acyl group from acyl-phosphate (acyl-PO(4)) to glycerol-3-phosphate (G3P) to form lysophosphatidic acid (LPA). This enzyme utilizes acyl-phosphate as fatty acyl donor, but not acyl-CoA or acyl-ACP. This Chromobacterium violaceum (strain ATCC 12472 / DSM 30191 / JCM 1249 / CCUG 213 / NBRC 12614 / NCIMB 9131 / NCTC 9757 / MK) protein is Glycerol-3-phosphate acyltransferase.